A 331-amino-acid polypeptide reads, in one-letter code: Pseudouridylate synthase TRUB2, mitochondrial (331 aa).

The transit peptide at 1 to 10 (MGSAGLSRLH) directs the protein to the mitochondrion. The active-site Nucleophile is the Asp98. Positions 296 to 331 (KSLSPGLDTKQLPSPGWSWDSQGPSSTLGLERGAGQ) are disordered. A compositionally biased stretch (polar residues) spans 314 to 323 (WDSQGPSSTL).

Belongs to the pseudouridine synthase TruB family. Forms a regulatory protein-RNA complex, consisting of RCC1L, NGRN, RPUSD3, RPUSD4, TRUB2, FASTKD2 and 16S mt-rRNA.

It localises to the mitochondrion matrix. It catalyses the reaction a uridine in mRNA = a pseudouridine in mRNA. It carries out the reaction uridine(55) in tRNA = pseudouridine(55) in tRNA. Minor enzyme contributing to the isomerization of uridine to pseudouridine (pseudouridylation) of specific mitochondrial mRNAs (mt-mRNAs) such as COXI and COXIII mt-mRNAs. As a component of a functional protein-RNA module, consisting of RCC1L, NGRN, RPUSD3, RPUSD4, TRUB2, FASTKD2 and 16S mitochondrial ribosomal RNA (16S mt-rRNA), controls 16S mt-rRNA abundance and is required for intra-mitochondrial translation. Also catalyzes pseudouridylation of some tRNAs, including synthesis of pseudouridine(55) from uracil-55, in the psi GC loop of a subset of tRNAs. The chain is Pseudouridylate synthase TRUB2, mitochondrial from Homo sapiens (Human).